A 53-amino-acid polypeptide reads, in one-letter code: ATP synthase protein 8 (53 aa).

The chain crosses the membrane as a helical span at residues 9 to 29 (WIFFLFFFICIFLIFNIMNYF).

It belongs to the ATPase protein 8 family. In terms of assembly, F-type ATPases have 2 components, CF(1) - the catalytic core - and CF(0) - the membrane proton channel.

It localises to the mitochondrion membrane. Functionally, mitochondrial membrane ATP synthase (F(1)F(0) ATP synthase or Complex V) produces ATP from ADP in the presence of a proton gradient across the membrane which is generated by electron transport complexes of the respiratory chain. F-type ATPases consist of two structural domains, F(1) - containing the extramembraneous catalytic core and F(0) - containing the membrane proton channel, linked together by a central stalk and a peripheral stalk. During catalysis, ATP synthesis in the catalytic domain of F(1) is coupled via a rotary mechanism of the central stalk subunits to proton translocation. Part of the complex F(0) domain. Minor subunit located with subunit a in the membrane. This is ATP synthase protein 8 (mt:ATPase8) from Bombyx mori (Silk moth).